A 380-amino-acid polypeptide reads, in one-letter code: Hydrogenase maturation factor HypD2 (380 aa).

C36, C64, and C67 together coordinate Fe cation.

This sequence belongs to the HypD family. It depends on [4Fe-4S] cluster as a cofactor.

It functions in the pathway protein modification; [NiFe] hydrogenase maturation. Involved in the maturation of [NiFe] hydrogenases. Involved in the biosynthesis of the Fe(CN)(2)CO cofactor. The sequence is that of Hydrogenase maturation factor HypD2 (hypD2) from Bradyrhizobium diazoefficiens (strain JCM 10833 / BCRC 13528 / IAM 13628 / NBRC 14792 / USDA 110).